Here is a 673-residue protein sequence, read N- to C-terminus: Methionine--tRNA ligase (673 aa).

Positions P15–H25 match the 'HIGH' region motif. Zn(2+) contacts are provided by C146, C149, C159, and C162. The short motif at K332–S336 is the 'KMSKS' region element. K335 is a binding site for ATP. The region spanning D572–K673 is the tRNA-binding domain.

This sequence belongs to the class-I aminoacyl-tRNA synthetase family. MetG type 1 subfamily. As to quaternary structure, homodimer. The cofactor is Zn(2+).

The protein resides in the cytoplasm. It catalyses the reaction tRNA(Met) + L-methionine + ATP = L-methionyl-tRNA(Met) + AMP + diphosphate. In terms of biological role, is required not only for elongation of protein synthesis but also for the initiation of all mRNA translation through initiator tRNA(fMet) aminoacylation. The sequence is that of Methionine--tRNA ligase from Shewanella loihica (strain ATCC BAA-1088 / PV-4).